The chain runs to 734 residues: Photosystem I P700 chlorophyll a apoprotein A2 (734 aa).

8 consecutive transmembrane segments (helical) span residues 46–69 (IFAS…FHVA), 135–158 (LYSG…LHLQ), 175–199 (LNHH…HVAI), 273–291 (MAHH…GHMY), 330–353 (LHIQ…QHMY), 369–395 (ASLY…IFFV), 417–439 (AIIS…LYVH), and 517–535 (FLVH…LILV). [4Fe-4S] cluster contacts are provided by Cys559 and Cys568. 2 consecutive transmembrane segments (helical) span residues 575 to 596 (AFYL…YWHW) and 643 to 665 (LSVW…MFLI). Positions 654, 662, and 670 each coordinate chlorophyll a. Trp671 is a binding site for phylloquinone. Residues 707 to 727 (LVGLAHFSVGYVLTYAAFVLA) form a helical membrane-spanning segment.

The protein belongs to the PsaA/PsaB family. The PsaA/B heterodimer binds the P700 chlorophyll special pair and subsequent electron acceptors. PSI consists of a core antenna complex that captures photons, and an electron transfer chain that converts photonic excitation into a charge separation. The eukaryotic PSI reaction center is composed of at least 11 subunits. P700 is a chlorophyll a/chlorophyll a' dimer, A0 is one or more chlorophyll a, A1 is one or both phylloquinones and FX is a shared 4Fe-4S iron-sulfur center. serves as cofactor.

Its subcellular location is the plastid. It is found in the chloroplast thylakoid membrane. It carries out the reaction reduced [plastocyanin] + hnu + oxidized [2Fe-2S]-[ferredoxin] = oxidized [plastocyanin] + reduced [2Fe-2S]-[ferredoxin]. Its function is as follows. PsaA and PsaB bind P700, the primary electron donor of photosystem I (PSI), as well as the electron acceptors A0, A1 and FX. PSI is a plastocyanin/cytochrome c6-ferredoxin oxidoreductase, converting photonic excitation into a charge separation, which transfers an electron from the donor P700 chlorophyll pair to the spectroscopically characterized acceptors A0, A1, FX, FA and FB in turn. Oxidized P700 is reduced on the lumenal side of the thylakoid membrane by plastocyanin or cytochrome c6. This chain is Photosystem I P700 chlorophyll a apoprotein A2, found in Pyropia yezoensis (Susabi-nori).